Consider the following 346-residue polypeptide: Probable aldo-keto reductase 2 (346 aa).

Catalysis depends on tyrosine 63, which acts as the Proton donor. A substrate-binding site is contributed by histidine 131. Residue 210-220 (SPLGRGFLAAG) participates in NADP(+) binding.

This sequence belongs to the aldo/keto reductase family. Aldo/keto reductase 13 subfamily.

This chain is Probable aldo-keto reductase 2 (AGD2), found in Arabidopsis thaliana (Mouse-ear cress).